The sequence spans 211 residues: External core antigen (211 aa).

An N-terminal signal peptide occupies residues 1–19; sequence MHLFHLCLIILCSCPTVQA. An HBEAG region spans residues 25-27; the sequence is GWL. The segment at 165-211 is disordered; sequence NAPILSTLPETTVVRRRRPSGRRTPSPRRRRSQSPRRRRSQSPASSC. The span at 178 to 204 shows a compositional bias: basic residues; the sequence is VRRRRPSGRRTPSPRRRRSQSPRRRRS. A 1; half-length repeat occupies 183-189; sequence PSGRRTP. Positions 183-205 are 3 X 8 AA repeats of S-P-R-R-R-R-S-Q; the sequence is PSGRRTPSPRRRRSQSPRRRRSQ. A propeptide spanning residues 183–211 is cleaved from the precursor; the sequence is PSGRRTPSPRRRRSQSPRRRRSQSPASSC. 2 repeat units span residues 190–197 and 198–205.

Belongs to the orthohepadnavirus precore antigen family. In terms of assembly, homodimerizes. Post-translationally, phosphorylated. In terms of processing, cleaved by host furin.

It localises to the secreted. The protein resides in the host nucleus. Functionally, may regulate immune response to the intracellular capsid in acting as a T-cell tolerogen, by having an immunoregulatory effect which prevents destruction of infected cells by cytotoxic T-cells. This immune regulation may predispose to chronicity during perinatal infections and prevent severe liver injury during adult infections. This Woolly monkey hepatitis B virus (isolate Louisville) (WMHBV) protein is External core antigen.